A 271-amino-acid polypeptide reads, in one-letter code: ATP synthase subunit a (271 aa).

The next 5 helical transmembrane spans lie at 40 to 60 (TINI…LVLF), 100 to 120 (LIAP…LMDL), 146 to 166 (DVNV…FYSI), 220 to 240 (LIFI…LNVP), and 242 to 262 (AIFH…LTIV).

It belongs to the ATPase A chain family. In terms of assembly, F-type ATPases have 2 components, CF(1) - the catalytic core - and CF(0) - the membrane proton channel. CF(1) has five subunits: alpha(3), beta(3), gamma(1), delta(1), epsilon(1). CF(0) has three main subunits: a(1), b(2) and c(9-12). The alpha and beta chains form an alternating ring which encloses part of the gamma chain. CF(1) is attached to CF(0) by a central stalk formed by the gamma and epsilon chains, while a peripheral stalk is formed by the delta and b chains.

It is found in the cell inner membrane. Its function is as follows. Key component of the proton channel; it plays a direct role in the translocation of protons across the membrane. This Escherichia coli O8 (strain IAI1) protein is ATP synthase subunit a.